The chain runs to 359 residues: Glutamate 5-kinase (359 aa).

An ATP-binding site is contributed by Lys7. Positions 47, 135, and 147 each coordinate substrate. An ATP-binding site is contributed by 202 to 208; the sequence is SGGITSK. One can recognise a PUA domain in the interval 266-343; it reads KGSIFINEGA…DQLEDVLGYS (78 aa).

This sequence belongs to the glutamate 5-kinase family.

Its subcellular location is the cytoplasm. The catalysed reaction is L-glutamate + ATP = L-glutamyl 5-phosphate + ADP. Its pathway is amino-acid biosynthesis; L-proline biosynthesis; L-glutamate 5-semialdehyde from L-glutamate: step 1/2. Its function is as follows. Catalyzes the transfer of a phosphate group to glutamate to form L-glutamate 5-phosphate. The polypeptide is Glutamate 5-kinase (Kosmotoga olearia (strain ATCC BAA-1733 / DSM 21960 / TBF 19.5.1)).